The primary structure comprises 626 residues: DNA mismatch repair protein MutL (626 aa).

Belongs to the DNA mismatch repair MutL/HexB family.

Its function is as follows. This protein is involved in the repair of mismatches in DNA. It is required for dam-dependent methyl-directed DNA mismatch repair. May act as a 'molecular matchmaker', a protein that promotes the formation of a stable complex between two or more DNA-binding proteins in an ATP-dependent manner without itself being part of a final effector complex. In Chlorobium luteolum (strain DSM 273 / BCRC 81028 / 2530) (Pelodictyon luteolum), this protein is DNA mismatch repair protein MutL.